The chain runs to 1129 residues: PAN2-PAN3 deadenylation complex catalytic subunit PAN2 (1129 aa).

WD repeat units lie at residues 20-60 (PPAV…YTSY), 104-146 (PDFK…DTLP), 148-183 (DAQY…VIKV), 186-226 (GHTG…FSLK), and 280-319 (LYDS…HFPE). A linker region spans residues 320–457 (YSNPTEFADH…DLHLDDVTRK (138 aa)). Residues 396–427 (RTKRRNQIEVTRQTDRSSDSLTPPKFLSEKSR) form a disordered region. Positions 458–830 (DVPAMYGNVE…LPSVLTFQTK (373 aa)) constitute a USP domain. The region spanning 880–1052 (VAIDAEFIRL…IEDATTALKL (173 aa)) is the Exonuclease domain. A divalent metal cation is bound by residues Asp-883, Glu-885, Asp-992, and Asp-1045. Positions 1083 to 1129 (APGSGNRNSMPAGMTATGAGRDTPEPMTTPKKGGAFGGVGFRSPMRR) are disordered.

Belongs to the peptidase C19 family. PAN2 subfamily. As to quaternary structure, forms a heterotrimer with an asymmetric homodimer of the regulatory subunit PAN3 to form the poly(A)-nuclease (PAN) deadenylation complex. A divalent metal cation is required as a cofactor.

Its subcellular location is the cytoplasm. The enzyme catalyses Exonucleolytic cleavage of poly(A) to 5'-AMP.. Positively regulated by the regulatory subunit PAN3. Catalytic subunit of the poly(A)-nuclease (PAN) deadenylation complex, one of two cytoplasmic mRNA deadenylases involved in mRNA turnover. PAN specifically shortens poly(A) tails of RNA and the activity is stimulated by poly(A)-binding protein PAB1. PAN deadenylation is followed by rapid degradation of the shortened mRNA tails by the CCR4-NOT complex. Deadenylated mRNAs are then degraded by two alternative mechanisms, namely exosome-mediated 3'-5' exonucleolytic degradation, or deadenylation-dependent mRNA decaping and subsequent 5'-3' exonucleolytic degradation by XRN1. May also be involved in post-transcriptional maturation of mRNA poly(A) tails. The protein is PAN2-PAN3 deadenylation complex catalytic subunit PAN2 of Phaeosphaeria nodorum (strain SN15 / ATCC MYA-4574 / FGSC 10173) (Glume blotch fungus).